The chain runs to 139 residues: Peptide methionine sulfoxide reductase MsrB (139 aa).

Positions D8 to A130 constitute a MsrB domain. Residues C47, C50, C96, and C99 each contribute to the Zn(2+) site. C119 acts as the Nucleophile in catalysis.

It belongs to the MsrB Met sulfoxide reductase family. The cofactor is Zn(2+).

The catalysed reaction is L-methionyl-[protein] + [thioredoxin]-disulfide + H2O = L-methionyl-(R)-S-oxide-[protein] + [thioredoxin]-dithiol. This is Peptide methionine sulfoxide reductase MsrB from Hahella chejuensis (strain KCTC 2396).